The chain runs to 563 residues: Eukaryotic translation initiation factor 3 subunit D (563 aa).

The disordered stretch occupies residues 95–136 (PGYMRNRNRFNQRGGYRRDNRGGRFQGQGGNMGMQNLSRGRD). The segment at 294–308 (EFDLLTVGETANDLN) is RNA gate. The segment at 528–563 (IPNSTFETDEEDDDDDEDDVENDDGDDEKDEGDGED) is disordered. A compositionally biased stretch (acidic residues) spans 534-563 (ETDEEDDDDDEDDVENDDGDDEKDEGDGED).

The protein belongs to the eIF-3 subunit D family. As to quaternary structure, component of the eukaryotic translation initiation factor 3 (eIF-3) complex.

It is found in the cytoplasm. Functionally, mRNA cap-binding component of the eukaryotic translation initiation factor 3 (eIF-3) complex, which is involved in protein synthesis of a specialized repertoire of mRNAs and, together with other initiation factors, stimulates binding of mRNA and methionyl-tRNAi to the 40S ribosome. The eIF-3 complex specifically targets and initiates translation of a subset of mRNAs involved in cell proliferation. In the eIF-3 complex, eif3d specifically recognizes and binds the 7-methylguanosine cap of a subset of mRNAs. The polypeptide is Eukaryotic translation initiation factor 3 subunit D (Nematostella vectensis (Starlet sea anemone)).